A 605-amino-acid chain; its full sequence is Capsid scaffolding protein (605 aa).

Residues histidine 48, serine 116, and histidine 139 each act as charge relay system in the active site. A disordered region spans residues 235 to 275 (ASDAPDLQKPDKALQSPPPASTDPDTMLSGNAGEGATACGG). The interaction with pAP stretch occupies residues 281–300 (QDLISVPRNTFMTLLQTNLD). 2 disordered regions span residues 403–432 (DYVP…PGED) and 489–588 (PHQS…KSVS). The Nuclear localization signal signature appears at 410-416 (RSNKRKR). Positions 568–579 (ASASGVAQSKEP) are enriched in polar residues. Residues 585–605 (KSVSAHLKSIFCEELLNKRVA) form an interaction with major capsid protein region.

It belongs to the herpesviridae capsid scaffolding protein family. Homomultimer. Interacts with major capsid protein. As to quaternary structure, exists in a monomer-dimer equilibrium with the dimer being the active species. Post-translationally, capsid scaffolding protein is cleaved by assemblin after formation of the spherical procapsid. As a result, the capsid obtains its mature, icosahedral shape. Cleavages occur at two or more sites: release (R-site) and maturation (M-site).

Its subcellular location is the host cytoplasm. It localises to the host nucleus. The catalysed reaction is Cleaves -Ala-|-Ser- and -Ala-|-Ala- bonds in the scaffold protein.. In terms of biological role, acts as a scaffold protein by binding major capsid protein in the cytoplasm, inducing the nuclear localization of both proteins. Multimerizes in the nucleus such as major capsid protein forms the icosahedral T=16 capsid. Autocatalytic cleavage releases the assembly protein, and subsequently abolishes interaction with major capsid protein. Cleavages products are evicted from the capsid before or during DNA packaging. Functionally, protease that plays an essential role in virion assembly within the nucleus. Catalyzes the cleavage of the assembly protein after formation of the spherical procapsid. By that cleavage, the capsid matures and gains its icosahedral shape. The cleavage sites seem to include -Ala-Ser-, -Ala-Ala-, as well as Ala-Thr bonds. Assemblin and cleavages products are evicted from the capsid before or during DNA packaging. Plays a major role in capsid assembly. Acts as a scaffold protein by binding major capsid protein. Multimerizes in the nucleus such as major capsid protein forms the icosahedral T=16 capsid. Cleaved by assemblin after capsid completion. The cleavages products are evicted from the capsid before or during DNA packaging. In Epstein-Barr virus (strain AG876) (HHV-4), this protein is Capsid scaffolding protein.